We begin with the raw amino-acid sequence, 285 residues long: Putative ABC transporter ATP-binding protein CPE0195 (285 aa).

An ABC transporter domain is found at 6 to 242 (LKVEELNYNY…KEVIRKVNLR (237 aa)). 39 to 46 (GGNGVGKS) contacts ATP.

The protein belongs to the ABC transporter superfamily.

Its subcellular location is the cell membrane. Functionally, probably part of an ABC transporter complex. Responsible for energy coupling to the transport system. This is Putative ABC transporter ATP-binding protein CPE0195 from Clostridium perfringens (strain 13 / Type A).